The following is a 1123-amino-acid chain: MTTILKGYYLKVTLENRIVKHNGRKVYLSIVEHGNGIPDHALILKTTAKCVKFSVCLSIRSQCGWKELDQNDSGELTFDLKVEVTGKSQRAPLFPLIFQLCEKNYDQVTLISKSVIPVKAITKIPKKSLRAELVPLGESPTKPPQAFPASPSDLISSKEYDDEFDGGNGGNSGTNGDGDDGGCSLGGLADENDYEDGMVIDENGNVCSSGSGDGGGGGGGGGDISPKLTSSLNNLKSSISNTSLSSLGNSLNNSLNGTNSQMLQYQQQQQQQQQQHGNLNVSGNNINNNRDTNVSGNNNNNNNSTTTTTTTTTTTTHSNNSNMGGSKKPLNNSNSNIHFLTNQQNSDTPLSNSSSSTPTLSPAQSAISSPTLSNIINSNSNSTSNLNDLIKDSSQPSTSTSTSTSSSSSSSSSSSSSSSSSSSSSSSSSSSSSSSSSSSSSSSSSSSSSSSSSSSSSSSSSSSSQPTLNQHSKYIPKSLHSSLSSIPINNKENNNNNNNRDNRDKDICTTSPNLNDSINNTLDLFNKKINSNNNNNNNNSNNNNNISSQERPLLNSPHVQLTHQQQQQQQQQQQQQQQQHQQQHQKIGMSKSSSELQVPSSNYHKQSDDLNPLDFLSAIATMGSNSLSSILCKDDSKTNTNKDKDNNNSNSNKDSSNNNNNNNNNNNNNNNNNNNNNNNNNNNNNNNNNNNNNNNNNNNNNNNINNNEDLLPNPGSSKFAKYSADQSVSSSSLNTPLSSPIVKSQSYQQPQSQSQQRSQSPLPLHNNISSINTSIHNAINSLKPKPLHLSSPSIPTTSPDAPYRLPSLNSSSNNINNQSDYWSAINPINSSGTNITNNNYNNNNNNYNNNNNNNNNNNNNNNNNNNNNNNNNNNNSNSNNNNNNNNNNNNINNNNSNSNNNMNSNNNNNNINNINNNNNNNNNNNNNNNNNNNNNNNNNNNNNSNSNNNNCNNNNNGGSNIHSLNNSSNSVNYNNNNNNNNNNINKDKKNKKKLSASTPIFGESNLGDIINNVIDEHQLNSNNNNNNNTPHFSFNNNSLKELKPLKRKASIRNSSGGVITNENGWTTIVNNNNNNNNNNNNNNNNNNNNNNNNNNNNNISSNLPIISGLLSLSKVDSTSVDKL.

8 disordered regions span residues 136-229 (LGES…PKLT), 262-471 (MLQY…LNQH), 483-514 (LSSIPINNKENNNNNNNRDNRDKDICTTSPNL), 527-609 (KKIN…QSDD), 629-769 (SILC…NNIS), 782-812 (LKPKPLHLSSPSIPTTSPDAPYRLPSLNSSS), 835-1005 (ITNN…GESN), and 1070-1099 (NNNNNNNNNNNNNNNNNNNNNNNNNNNNNI). The span at 166 to 185 (GGNGGNSGTNGDGDDGGCSL) shows a compositional bias: gly residues. Residues 190–199 (DENDYEDGMV) are compositionally biased toward acidic residues. Over residues 211–223 (SGDGGGGGGGGGD) the composition is skewed to gly residues. Residues 262-322 (MLQYQQQQQQ…TTTTHSNNSN (61 aa)) show a composition bias toward low complexity. Over residues 329–343 (PLNNSNSNIHFLTNQ) the composition is skewed to polar residues. Low complexity-rich tracts occupy residues 344–387 (QNSD…SNLN), 397–464 (STST…SSSS), 489–499 (NNKENNNNNNN), 527–548 (KKINSNNNNNNNNSNNNNNISS), and 563–585 (HQQQQQQQQQQQQQQQQHQQQHQ). Residues 590–604 (SKSSSELQVPSSNYH) show a composition bias toward polar residues. Residues 632–646 (CKDDSKTNTNKDKDN) show a composition bias toward basic and acidic residues. Composition is skewed to low complexity over residues 647–707 (NNSN…INNN) and 727–769 (SVSS…NNIS). Over residues 790–799 (SSPSIPTTSP) the composition is skewed to polar residues. Low complexity-rich tracts occupy residues 835 to 984 (ITNN…NNNI) and 1070 to 1098 (NNNNNNNNNNNNNNNNNNNNNNNNNNNNN).

This is an uncharacterized protein from Dictyostelium discoideum (Social amoeba).